The sequence spans 560 residues: Dihydroxy-acid dehydratase (560 aa).

Residue Cys-52 coordinates [2Fe-2S] cluster. Asp-84 provides a ligand contact to Mg(2+). Position 125 (Cys-125) interacts with [2Fe-2S] cluster. Residues Asp-126 and Lys-127 each coordinate Mg(2+). Lys-127 carries the N6-carboxylysine modification. Position 197 (Cys-197) interacts with [2Fe-2S] cluster. Glu-449 is a Mg(2+) binding site. The Proton acceptor role is filled by Ser-475.

This sequence belongs to the IlvD/Edd family. Homodimer. The cofactor is [2Fe-2S] cluster. It depends on Mg(2+) as a cofactor.

The enzyme catalyses (2R)-2,3-dihydroxy-3-methylbutanoate = 3-methyl-2-oxobutanoate + H2O. The catalysed reaction is (2R,3R)-2,3-dihydroxy-3-methylpentanoate = (S)-3-methyl-2-oxopentanoate + H2O. It participates in amino-acid biosynthesis; L-isoleucine biosynthesis; L-isoleucine from 2-oxobutanoate: step 3/4. It functions in the pathway amino-acid biosynthesis; L-valine biosynthesis; L-valine from pyruvate: step 3/4. Its function is as follows. Functions in the biosynthesis of branched-chain amino acids. Catalyzes the dehydration of (2R,3R)-2,3-dihydroxy-3-methylpentanoate (2,3-dihydroxy-3-methylvalerate) into 2-oxo-3-methylpentanoate (2-oxo-3-methylvalerate) and of (2R)-2,3-dihydroxy-3-methylbutanoate (2,3-dihydroxyisovalerate) into 2-oxo-3-methylbutanoate (2-oxoisovalerate), the penultimate precursor to L-isoleucine and L-valine, respectively. This Sulfurisphaera tokodaii (strain DSM 16993 / JCM 10545 / NBRC 100140 / 7) (Sulfolobus tokodaii) protein is Dihydroxy-acid dehydratase.